We begin with the raw amino-acid sequence, 197 residues long: GCN5-related N-acetyltransferase 1, chloroplastic (197 aa).

The N-terminal 37 residues, 1 to 37, are a transit peptide targeting the chloroplast; sequence MFLGGTISTPPASLRLRSTLNPQNAVTQSSSQATFPA. Residues 23–34 show a composition bias toward polar residues; it reads QNAVTQSSSQAT. Residues 23 to 46 form a disordered region; sequence QNAVTQSSSQATFPAAMQRKPPSY. The region spanning 58–195 is the N-acetyltransferase domain; the sequence is FLLRRTTEGL…GMVFIRKQRN (138 aa). Residues 129-131, 137-142, 165-167, and tyrosine 172 contribute to the acetyl-CoA site; these read VVV, SCGLGK, and EPR. The Proton donor role is filled by tyrosine 172.

It belongs to the acetyltransferase family. GNAT subfamily. In terms of assembly, oligomer. Post-translationally, autoacetylated. As to expression, expressed in green tissues. Accumulates mainly in flowers and young leaves, and, to a lower extent, in stems and mature leaves, but barely in roots.

It is found in the plastid. The protein localises to the chloroplast. It carries out the reaction an N-terminal L-alpha-aminoacyl-[protein] + acetyl-CoA = N-terminal N(alpha)-acetyl-L-alpha-aminoacyl-[protein] + CoA + H(+). It catalyses the reaction L-lysyl-[protein] + acetyl-CoA = N(6)-acetyl-L-lysyl-[protein] + CoA + H(+). The catalysed reaction is 5-methoxytryptamine + acetyl-CoA = melatonin + CoA + H(+). The enzyme catalyses serotonin + acetyl-CoA = N-acetylserotonin + CoA + H(+). Inhibited by 5-methoxytryptamine in vitro. Its function is as follows. Protein acetyltransferase with dual specificity triggering both N-alpha-acetylation (NTA) and epsilon-lysine acetylation (KA), possibly with a low efficiency or toward specific plastid substrates. Involved in melatonin biosynthesis by catalyzing the formation of N-acetylserotonin (NAS) from serotonin and of melatonin (N-acetyl-5-methoxytryptamine) from 5-methoxytryptamine (5-MT). This chain is GCN5-related N-acetyltransferase 1, chloroplastic, found in Arabidopsis thaliana (Mouse-ear cress).